We begin with the raw amino-acid sequence, 212 residues long: ATP-dependent dethiobiotin synthetase BioD (212 aa).

ATP is bound at residue 13–18 (GIGKTV). A Mg(2+)-binding site is contributed by Thr-17. Lys-33 is a catalytic residue. A substrate-binding site is contributed by Ser-37. A Mg(2+)-binding site is contributed by Glu-100. ATP-binding positions include 100–103 (EGAG) and 184–186 (PRL).

This sequence belongs to the dethiobiotin synthetase family. In terms of assembly, homodimer. The cofactor is Mg(2+).

It is found in the cytoplasm. The enzyme catalyses (7R,8S)-7,8-diammoniononanoate + CO2 + ATP = (4R,5S)-dethiobiotin + ADP + phosphate + 3 H(+). It functions in the pathway cofactor biosynthesis; biotin biosynthesis; biotin from 7,8-diaminononanoate: step 1/2. Its function is as follows. Catalyzes a mechanistically unusual reaction, the ATP-dependent insertion of CO2 between the N7 and N8 nitrogen atoms of 7,8-diaminopelargonic acid (DAPA, also called 7,8-diammoniononanoate) to form a ureido ring. The polypeptide is ATP-dependent dethiobiotin synthetase BioD (Rhodopseudomonas palustris (strain ATCC BAA-98 / CGA009)).